The primary structure comprises 794 residues: Zinc finger protein 148 (794 aa).

A Glycyl lysine isopeptide (Lys-Gly) (interchain with G-Cter in SUMO2) cross-link involves residue Lys6. The residue at position 51 (Ser51) is a Phosphoserine. Residues Lys88, Lys115, and Lys132 each participate in a glycyl lysine isopeptide (Lys-Gly) (interchain with G-Cter in SUMO2) cross-link. The segment at 171–193 adopts a C2H2-type 1 zinc-finger fold; that stretch reads HVCEHCNAAFRTNYHLQRHVFIH. Thr194 is modified (phosphothreonine). C2H2-type zinc fingers lie at residues 199–221 and 227–249; these read FQCS…EKIH and FRCD…KRTH. Ser250 bears the Phosphoserine mark. The C2H2-type 4 zinc-finger motif lies at 255–278; that stretch reads YQCEYCLQYFSRTDRVLKHKRMCH. A Glycyl lysine isopeptide (Lys-Gly) (interchain with G-Cter in SUMO2) cross-link involves residue Lys291. The interval 298–336 is disordered; it reads EEDSGFSTSPKDNSLPKKKRQKTEKKSSGMDKESVLDKS. Phosphoserine occurs at positions 301 and 306. A Glycyl lysine isopeptide (Lys-Gly) (interchain with G-Cter in SUMO2) cross-link involves residue Lys308. Basic and acidic residues predominate over residues 321-336; that stretch reads EKKSSGMDKESVLDKS. Residue Lys356 forms a Glycyl lysine isopeptide (Lys-Gly) (interchain with G-Cter in SUMO1); alternate linkage. Lys356 is covalently cross-linked (Glycyl lysine isopeptide (Lys-Gly) (interchain with G-Cter in SUMO2); alternate). Residue Lys402 forms a Glycyl lysine isopeptide (Lys-Gly) (interchain with G-Cter in SUMO2) linkage. At Ser412 the chain carries Phosphoserine. Residues Lys421 and Lys424 each participate in a glycyl lysine isopeptide (Lys-Gly) (interchain with G-Cter in SUMO2) cross-link. Over residues 574–588 the composition is skewed to polar residues; sequence NSSDVPEVTQSENVG. The tract at residues 574-599 is disordered; the sequence is NSSDVPEVTQSENVGSSSQASSSDKA. Lys607 is subject to N6-acetyllysine. Phosphoserine occurs at positions 665 and 784.

Belongs to the krueppel C2H2-type zinc-finger protein family. As to quaternary structure, interacts with HNRNPDL. Interacts with the 5FMC complex; the interaction requires association with CHTOP. Interacts with CAVIN1. In terms of processing, sumoylated with SUMO2. Desumoylated by SENP3, resulting in the stimulation of transcription of its target genes. Strong expression detected in brain, lung, liver and kidney, with lower levels detected in spleen, skeletal muscle, testis and heart.

The protein resides in the nucleus. Involved in transcriptional regulation. Represses the transcription of a number of genes including gastrin, stromelysin and enolase. Binds to the G-rich box in the enhancer region of these genes. The chain is Zinc finger protein 148 (Znf148) from Mus musculus (Mouse).